Here is a 289-residue protein sequence, read N- to C-terminus: Epoxyqueuosine reductase (289 aa).

Aspartate 111 functions as the Proton donor in the catalytic mechanism. In terms of domain architecture, 4Fe-4S ferredoxin-type spans 156–185 (QGDRPHSQHCGTCTRCLEACPTQAIVEPFV). Cysteine 165, cysteine 168, cysteine 171, cysteine 175, cysteine 191, cysteine 219, cysteine 222, and cysteine 226 together coordinate [4Fe-4S] cluster.

Belongs to the QueG family. In terms of assembly, monomer. Cob(II)alamin is required as a cofactor. It depends on [4Fe-4S] cluster as a cofactor.

It is found in the cytoplasm. The catalysed reaction is epoxyqueuosine(34) in tRNA + AH2 = queuosine(34) in tRNA + A + H2O. It participates in tRNA modification; tRNA-queuosine biosynthesis. Functionally, catalyzes the conversion of epoxyqueuosine (oQ) to queuosine (Q), which is a hypermodified base found in the wobble positions of tRNA(Asp), tRNA(Asn), tRNA(His) and tRNA(Tyr). The chain is Epoxyqueuosine reductase from Synechocystis sp. (strain ATCC 27184 / PCC 6803 / Kazusa).